A 56-amino-acid chain; its full sequence is Bowman-Birk type proteinase inhibitor I-2B (56 aa).

Disulfide bonds link Cys-10-Cys-25, Cys-15-Cys-23, Cys-32-Cys-39, and Cys-36-Cys-51.

This sequence belongs to the Bowman-Birk serine protease inhibitor family.

The chain is Bowman-Birk type proteinase inhibitor I-2B from Triticum aestivum (Wheat).